A 92-amino-acid polypeptide reads, in one-letter code: Elongation factor 1-beta (92 aa).

Belongs to the EF-1-beta/EF-1-delta family.

Promotes the exchange of GDP for GTP in EF-1-alpha/GDP, thus allowing the regeneration of EF-1-alpha/GTP that could then be used to form the ternary complex EF-1-alpha/GTP/AAtRNA. This Pyrobaculum calidifontis (strain DSM 21063 / JCM 11548 / VA1) protein is Elongation factor 1-beta.